A 507-amino-acid chain; its full sequence is ATP synthase subunit alpha, chloroplastic (507 aa).

170-177 (GDRQTGKT) lines the ATP pocket. Position 257 is a phosphothreonine (Thr-257).

Belongs to the ATPase alpha/beta chains family. As to quaternary structure, F-type ATPases have 2 components, CF(1) - the catalytic core - and CF(0) - the membrane proton channel. CF(1) has five subunits: alpha(3), beta(3), gamma(1), delta(1), epsilon(1). CF(0) has four main subunits: a, b, b' and c.

It localises to the plastid. The protein localises to the chloroplast thylakoid membrane. The enzyme catalyses ATP + H2O + 4 H(+)(in) = ADP + phosphate + 5 H(+)(out). Functionally, produces ATP from ADP in the presence of a proton gradient across the membrane. The alpha chain is a regulatory subunit. This chain is ATP synthase subunit alpha, chloroplastic, found in Draba nemorosa (Woodland whitlowgrass).